Reading from the N-terminus, the 255-residue chain is 5'-nucleotidase SurE (255 aa).

Residues Asp-8, Asp-9, Ser-39, and Asn-95 each contribute to the a divalent metal cation site.

The protein belongs to the SurE nucleotidase family. The cofactor is a divalent metal cation.

It localises to the cytoplasm. It carries out the reaction a ribonucleoside 5'-phosphate + H2O = a ribonucleoside + phosphate. Its function is as follows. Nucleotidase that shows phosphatase activity on nucleoside 5'-monophosphates. This is 5'-nucleotidase SurE from Herpetosiphon aurantiacus (strain ATCC 23779 / DSM 785 / 114-95).